We begin with the raw amino-acid sequence, 753 residues long: 5-methyltetrahydropteroyltriglutamate--homocysteine methyltransferase (753 aa).

5-methyltetrahydropteroyltri-L-glutamate is bound by residues 17–20 and K117; that span reads RELK. L-homocysteine contacts are provided by residues 431–433 and E484; that span reads IGS. L-methionine is bound by residues 431-433 and E484; that span reads IGS. Residues 515–516 and W561 contribute to the 5-methyltetrahydropteroyltri-L-glutamate site; that span reads RC. L-homocysteine is bound at residue D599. Residue D599 participates in L-methionine binding. Residue E605 participates in 5-methyltetrahydropteroyltri-L-glutamate binding. Zn(2+) contacts are provided by H641, C643, and E665. H694 acts as the Proton donor in catalysis. C726 provides a ligand contact to Zn(2+).

The protein belongs to the vitamin-B12 independent methionine synthase family. It depends on Zn(2+) as a cofactor.

The enzyme catalyses 5-methyltetrahydropteroyltri-L-glutamate + L-homocysteine = tetrahydropteroyltri-L-glutamate + L-methionine. Its pathway is amino-acid biosynthesis; L-methionine biosynthesis via de novo pathway; L-methionine from L-homocysteine (MetE route): step 1/1. Catalyzes the transfer of a methyl group from 5-methyltetrahydrofolate to homocysteine resulting in methionine formation. The protein is 5-methyltetrahydropteroyltriglutamate--homocysteine methyltransferase of Shigella flexneri.